Here is a 294-residue protein sequence, read N- to C-terminus: Putative pyruvate, phosphate dikinase regulatory protein (294 aa).

ADP is bound at residue 156-163 (GVSRSGKT).

It belongs to the pyruvate, phosphate/water dikinase regulatory protein family. PDRP subfamily.

It carries out the reaction N(tele)-phospho-L-histidyl/L-threonyl-[pyruvate, phosphate dikinase] + ADP = N(tele)-phospho-L-histidyl/O-phospho-L-threonyl-[pyruvate, phosphate dikinase] + AMP + H(+). The catalysed reaction is N(tele)-phospho-L-histidyl/O-phospho-L-threonyl-[pyruvate, phosphate dikinase] + phosphate + H(+) = N(tele)-phospho-L-histidyl/L-threonyl-[pyruvate, phosphate dikinase] + diphosphate. Functionally, bifunctional serine/threonine kinase and phosphorylase involved in the regulation of the pyruvate, phosphate dikinase (PPDK) by catalyzing its phosphorylation/dephosphorylation. The sequence is that of Putative pyruvate, phosphate dikinase regulatory protein from Cutibacterium acnes (strain DSM 16379 / KPA171202) (Propionibacterium acnes).